The primary structure comprises 94 residues: Alpha-conotoxin Ms20.3 (94 aa).

The first 24 residues, 1-24, serve as a signal peptide directing secretion; the sequence is MPKLAVVLLVLLILPLSYFDAAGG. Positions 25–45 are excised as a propeptide; that stretch reads QVVQGDRRGNGLARYLQRGDR. E49 bears the 4-carboxyglutamate mark. P55 is modified (4-hydroxyproline). Disulfide bonds link C63-C72, C68-C80, C73-C90, and C78-C92.

It belongs to the conotoxin D superfamily. Hetero-, homo- or pseudo-homodimer (identical sequence, different post-translational modifications). Homodimer of [carboxyGlu-49, hydroxyPro-55]Ms20.3, and heterodimer of [carboxyGlu-49, hydroxyPro-55]Ms20.3 and [carboxy'Glu-50', hydroxy'Pro-56']Ms20.5 may exist. In terms of tissue distribution, expressed by the venom duct.

It localises to the secreted. Its function is as follows. Alpha-D-conopeptides act on postsynaptic membranes, they bind to the nicotinic acetylcholine receptors (nAChR) and thus inhibit them. Through its two C-terminal domains, this homodimeric protein would bind to two nAChR allosteric sites, located outside the nAChR C-loop of the principal binding face and at the adjacent binding interface in a clockwise direction. This toxin specifically blocks mammalian neuronal nAChR of the alpha-7/CHRNA7 (IC(50)=0.12 nM), alpha-3-beta-2/CHRNA3-CHRNB2 (IC(50)=1.08 nM), and alpha-4-beta-2/CHRNA4-CHRNB2 (IC(50)=4.5 nM) subtypes. Has no effect on alpha-3-beta-4/CHRNA3-CHRNB4, alpha-4-beta-4/CHRNA4-CHRNB4 and alpha-1-beta-1-epsilon-delta/CHRNA1-CHRNB1-CHRNE-CHRND subtypes of nAChRs. This chain is Alpha-conotoxin Ms20.3, found in Conus mustelinus (Weasel cone).